The primary structure comprises 26 residues: uncharacterized protein (26 aa).

The protein localises to the plastid. It is found in the chloroplast. This is an uncharacterized protein from Trieres chinensis (Marine centric diatom).